The following is a 266-amino-acid chain: Undecaprenyl-diphosphatase (266 aa).

The next 8 membrane-spanning stretches (helical) occupy residues methionine 1–isoleucine 21, proline 39–phenylalanine 59, isoleucine 87–glycine 107, leucine 117–threonine 137, tyrosine 153–isoleucine 173, phenylalanine 189–alanine 209, phenylalanine 216–isoleucine 236, and histidine 246–leucine 266.

It belongs to the UppP family.

It is found in the cell inner membrane. It catalyses the reaction di-trans,octa-cis-undecaprenyl diphosphate + H2O = di-trans,octa-cis-undecaprenyl phosphate + phosphate + H(+). In terms of biological role, catalyzes the dephosphorylation of undecaprenyl diphosphate (UPP). Confers resistance to bacitracin. This chain is Undecaprenyl-diphosphatase, found in Prochlorococcus marinus subsp. pastoris (strain CCMP1986 / NIES-2087 / MED4).